Here is a 598-residue protein sequence, read N- to C-terminus: Elongation factor 4 (598 aa).

The region spanning 2-184 (NRIRNFSIIA…TIVAKLPPPK (183 aa)) is the tr-type G domain. GTP-binding positions include 14–19 (DHGKST) and 131–134 (NKID).

It belongs to the TRAFAC class translation factor GTPase superfamily. Classic translation factor GTPase family. LepA subfamily.

The protein resides in the cell inner membrane. It catalyses the reaction GTP + H2O = GDP + phosphate + H(+). In terms of biological role, required for accurate and efficient protein synthesis under certain stress conditions. May act as a fidelity factor of the translation reaction, by catalyzing a one-codon backward translocation of tRNAs on improperly translocated ribosomes. Back-translocation proceeds from a post-translocation (POST) complex to a pre-translocation (PRE) complex, thus giving elongation factor G a second chance to translocate the tRNAs correctly. Binds to ribosomes in a GTP-dependent manner. This chain is Elongation factor 4, found in Desulfosudis oleivorans (strain DSM 6200 / JCM 39069 / Hxd3) (Desulfococcus oleovorans).